A 106-amino-acid polypeptide reads, in one-letter code: Small ribosomal subunit protein uS10 (106 aa).

Belongs to the universal ribosomal protein uS10 family. In terms of assembly, part of the 30S ribosomal subunit.

Functionally, involved in the binding of tRNA to the ribosomes. This chain is Small ribosomal subunit protein uS10, found in Pyrobaculum neutrophilum (strain DSM 2338 / JCM 9278 / NBRC 100436 / V24Sta) (Thermoproteus neutrophilus).